The primary structure comprises 306 residues: Pyridoxal 5'-phosphate synthase subunit PdxS (306 aa).

Aspartate 36 provides a ligand contact to D-ribose 5-phosphate. Lysine 93 functions as the Schiff-base intermediate with D-ribose 5-phosphate in the catalytic mechanism. Glycine 165 provides a ligand contact to D-ribose 5-phosphate. Residue arginine 177 coordinates D-glyceraldehyde 3-phosphate. Residues glycine 226 and 247–248 (GS) each bind D-ribose 5-phosphate.

The protein belongs to the PdxS/SNZ family. In the presence of PdxT, forms a dodecamer of heterodimers.

It catalyses the reaction aldehydo-D-ribose 5-phosphate + D-glyceraldehyde 3-phosphate + L-glutamine = pyridoxal 5'-phosphate + L-glutamate + phosphate + 3 H2O + H(+). It participates in cofactor biosynthesis; pyridoxal 5'-phosphate biosynthesis. Its function is as follows. Catalyzes the formation of pyridoxal 5'-phosphate from ribose 5-phosphate (RBP), glyceraldehyde 3-phosphate (G3P) and ammonia. The ammonia is provided by the PdxT subunit. Can also use ribulose 5-phosphate and dihydroxyacetone phosphate as substrates, resulting from enzyme-catalyzed isomerization of RBP and G3P, respectively. This is Pyridoxal 5'-phosphate synthase subunit PdxS from Salinispora arenicola (strain CNS-205).